We begin with the raw amino-acid sequence, 37 residues long: Potassium channel toxin alpha-KTx 2.14 (37 aa).

3 disulfide bridges follow: Cys7–Cys28, Cys13–Cys33, and Cys17–Cys35.

It belongs to the short scorpion toxin superfamily. Potassium channel inhibitor family. Alpha-KTx 02 subfamily. In terms of tissue distribution, expressed by the venom gland.

It is found in the secreted. In terms of biological role, reversibly blocks hKv1.1/KCNA1 (50% inhibition of current at 1 uM). Seems not to be voltage-dependent. This Heteroctenus garridoi (Cuban scorpion) protein is Potassium channel toxin alpha-KTx 2.14.